The chain runs to 773 residues: Ribosomal protein S6 kinase alpha-4 (773 aa).

In terms of domain architecture, Protein kinase 1 spans 33–301 (FALLKVLGTG…AQEVKSHPFF (269 aa)). Residues 39 to 47 (LGTGAYGKV) and K65 each bind ATP. D161 acts as the Proton acceptor in catalysis. Position 196 is a phosphoserine; by autocatalysis (S196). The 70-residue stretch at 302-371 (QGLDWVALAA…VAPSILFDHN (70 aa)) folds into the AGC-kinase C-terminal domain. S343 is subject to Phosphoserine; by MAPK1, MAPK3 and MAPK14. S347 is subject to Phosphoserine. Residues S360 and S365 each carry the phosphoserine; by autocatalysis modification. ATP-binding positions include 417-425 (LGQGSFSVC) and K440. The 258-residue stretch at 417–674 (LGQGSFSVCR…LEGLRSSSWL (258 aa)) folds into the Protein kinase 2 domain. D530 (proton acceptor) is an active-site residue. The residue at position 542 (T542) is a Phosphothreonine. T568 is modified (phosphothreonine; by MAPK1, MAPK3 and MAPK14). S634 and S678 each carry phosphoserine. Disordered stretches follow at residues 674–696 (LQDGSARSSPPLRTPDVLESSGP) and 728–773 (AKRR…LSPS). T687 carries the phosphothreonine modification. Phosphoserine; by autocatalysis occurs at positions 737 and 745.

Belongs to the protein kinase superfamily. AGC Ser/Thr protein kinase family. S6 kinase subfamily. Forms a complex with either MAPK1/ERK2 or MAPK3/ERK1 in quiescent cells which transiently dissociates following mitogenic stimulation. Also associates with MAPK14/p38-alpha. Activated RPS6KA4 associates with and phosphorylates the NF-kappa-B p65 subunit RELA. It depends on Mg(2+) as a cofactor. Ser-343 and Thr-568 phosphorylation is required for kinase activity. Ser-343 and Ser-196 are autophosphorylated by the C-terminal kinase domain, and their phosphorylation is essential for the catalytic activity of the N-terminal kinase domain. Phosphorylated at Ser-343, Thr-568 and Thr-687 by MAPK1/ERK2, MAPK3/ERK1 and MAPK14/p38-alpha. Autophosphorylated at Ser-737 and Ser-745 by the N-terminal kinase domain.

The protein localises to the nucleus. The catalysed reaction is L-seryl-[protein] + ATP = O-phospho-L-seryl-[protein] + ADP + H(+). It carries out the reaction L-threonyl-[protein] + ATP = O-phospho-L-threonyl-[protein] + ADP + H(+). With respect to regulation, activated by phosphorylation at Ser-343, Thr-568 and Thr-687 by MAPK1/ERK2, MAPK3/ERK1 and MAPK14/p38-alpha, and by further autophosphorylation of Ser-196, Ser-360 and Ser-365 by the activated C-terminal kinase domain. Functionally, serine/threonine-protein kinase that is required for the mitogen or stress-induced phosphorylation of the transcription factors CREB1 and ATF1 and for the regulation of the transcription factor RELA, and that contributes to gene activation by histone phosphorylation and functions in the regulation of inflammatory genes. Phosphorylates CREB1 and ATF1 in response to mitogenic or stress stimuli such as UV-C irradiation, epidermal growth factor (EGF) and anisomycin. Plays an essential role in the control of RELA transcriptional activity in response to TNF. Phosphorylates 'Ser-10' of histone H3 in response to mitogenics, stress stimuli and EGF, which results in the transcriptional activation of several immediate early genes, including proto-oncogenes c-fos/FOS and c-jun/JUN. May also phosphorylate 'Ser-28' of histone H3. Mediates the mitogen- and stress-induced phosphorylation of high mobility group protein 1 (HMGN1/HMG14). In lipopolysaccharide-stimulated primary macrophages, acts downstream of the Toll-like receptor TLR4 to limit the production of pro-inflammatory cytokines. Functions probably by inducing transcription of the MAP kinase phosphatase DUSP1 and the anti-inflammatory cytokine interleukin 10 (IL10), via CREB1 and ATF1 transcription factors. This Mus musculus (Mouse) protein is Ribosomal protein S6 kinase alpha-4 (Rps6ka4).